The following is a 241-amino-acid chain: Kynurenine formamidase (241 aa).

The HGGXW motif lies at 23-27 (HGGAW). Ser-95 functions as the Nucleophile in the catalytic mechanism. Active-site residues include Asp-191 and His-223.

The protein belongs to the kynurenine formamidase family. Homodimer.

The enzyme catalyses N-formyl-L-kynurenine + H2O = L-kynurenine + formate + H(+). It participates in amino-acid degradation; L-tryptophan degradation via kynurenine pathway; L-kynurenine from L-tryptophan: step 2/2. In terms of biological role, catalyzes the hydrolysis of N-formyl-L-kynurenine to L-kynurenine, the second step in the kynurenine pathway of tryptophan degradation. Kynurenine may be further oxidized to nicotinic acid, NAD(H) and NADP(H). Required for elimination of toxic metabolites. The chain is Kynurenine formamidase from Eremothecium gossypii (strain ATCC 10895 / CBS 109.51 / FGSC 9923 / NRRL Y-1056) (Yeast).